We begin with the raw amino-acid sequence, 346 residues long: NADH-ubiquinone oxidoreductase chain 2 (346 aa).

9 helical membrane passes run 7–27, 59–79, 93–115, 151–171, 178–198, 200–220, 242–262, 275–294, and 325–345; these read AIITSGLILGPIITMSSNHWI, YFLTQAMASYLMLSAALMNMW, ISCTTMTVAMSIKLAAAPFHFWF, TTLLIALGMTSILIGGWGGLN, IMAFSSIAHLGWMYAILTLSP, ILLLTFYLYVAMTATTFLMIN, TMMLLNLMSLAGLPPLTGFAP, LSMFASMMITSSLLSLYFYL, and LATITPLATALMPLLPTLKAI.

The protein belongs to the complex I subunit 2 family.

It localises to the mitochondrion inner membrane. The catalysed reaction is a ubiquinone + NADH + 5 H(+)(in) = a ubiquinol + NAD(+) + 4 H(+)(out). In terms of biological role, core subunit of the mitochondrial membrane respiratory chain NADH dehydrogenase (Complex I) that is believed to belong to the minimal assembly required for catalysis. Complex I functions in the transfer of electrons from NADH to the respiratory chain. The immediate electron acceptor for the enzyme is believed to be ubiquinone. The polypeptide is NADH-ubiquinone oxidoreductase chain 2 (MT-ND2) (Pelomedusa subrufa (African side-necked turtle)).